The sequence spans 45 residues: Large ribosomal subunit protein bL34 (45 aa).

2 stretches are compositionally biased toward basic residues: residues 1–15 and 22–45; these read MKAKSHLSNKKRKRA and MKTKAGRKILARRRAKGRKRIAIK. The interval 1 to 45 is disordered; that stretch reads MKAKSHLSNKKRKRASGFLARMKTKAGRKILARRRAKGRKRIAIK.

It belongs to the bacterial ribosomal protein bL34 family.

This chain is Large ribosomal subunit protein bL34, found in Sulfurihydrogenibium sp. (strain YO3AOP1).